The chain runs to 240 residues: Pyridoxine 5'-phosphate synthase (240 aa).

N7 lines the 3-amino-2-oxopropyl phosphate pocket. 9–10 (DH) contacts 1-deoxy-D-xylulose 5-phosphate. A 3-amino-2-oxopropyl phosphate-binding site is contributed by R18. H43 (proton acceptor) is an active-site residue. 1-deoxy-D-xylulose 5-phosphate is bound by residues R45 and H50. E70 acts as the Proton acceptor in catalysis. T100 is a 1-deoxy-D-xylulose 5-phosphate binding site. H191 acts as the Proton donor in catalysis. Residues G192 and 213-214 (GH) contribute to the 3-amino-2-oxopropyl phosphate site.

Belongs to the PNP synthase family. In terms of assembly, homooctamer; tetramer of dimers.

The protein localises to the cytoplasm. It catalyses the reaction 3-amino-2-oxopropyl phosphate + 1-deoxy-D-xylulose 5-phosphate = pyridoxine 5'-phosphate + phosphate + 2 H2O + H(+). The protein operates within cofactor biosynthesis; pyridoxine 5'-phosphate biosynthesis; pyridoxine 5'-phosphate from D-erythrose 4-phosphate: step 5/5. Its function is as follows. Catalyzes the complicated ring closure reaction between the two acyclic compounds 1-deoxy-D-xylulose-5-phosphate (DXP) and 3-amino-2-oxopropyl phosphate (1-amino-acetone-3-phosphate or AAP) to form pyridoxine 5'-phosphate (PNP) and inorganic phosphate. This Acaryochloris marina (strain MBIC 11017) protein is Pyridoxine 5'-phosphate synthase.